Here is a 393-residue protein sequence, read N- to C-terminus: LL-diaminopimelate aminotransferase (393 aa).

Substrate-binding residues include Y14 and G41. Pyridoxal 5'-phosphate-binding positions include Y71, 104 to 105 (AK), Y128, N174, Y205, and 233 to 235 (SFS). Positions 105, 128, and 174 each coordinate substrate. K236 carries the N6-(pyridoxal phosphate)lysine modification. Positions 244 and 275 each coordinate pyridoxal 5'-phosphate. Positions 275 and 369 each coordinate substrate.

The protein belongs to the class-I pyridoxal-phosphate-dependent aminotransferase family. LL-diaminopimelate aminotransferase subfamily. Homodimer. Pyridoxal 5'-phosphate is required as a cofactor.

It catalyses the reaction (2S,6S)-2,6-diaminopimelate + 2-oxoglutarate = (S)-2,3,4,5-tetrahydrodipicolinate + L-glutamate + H2O + H(+). Its pathway is amino-acid biosynthesis; L-lysine biosynthesis via DAP pathway; LL-2,6-diaminopimelate from (S)-tetrahydrodipicolinate (aminotransferase route): step 1/1. Functionally, involved in the synthesis of meso-diaminopimelate (m-DAP or DL-DAP), required for both lysine and peptidoglycan biosynthesis. Catalyzes the direct conversion of tetrahydrodipicolinate to LL-diaminopimelate. The protein is LL-diaminopimelate aminotransferase of Chlamydia muridarum (strain MoPn / Nigg).